A 132-amino-acid polypeptide reads, in one-letter code: Small ribosomal subunit protein uS8 (132 aa).

It belongs to the universal ribosomal protein uS8 family. Part of the 30S ribosomal subunit. Contacts proteins S5 and S12.

Functionally, one of the primary rRNA binding proteins, it binds directly to 16S rRNA central domain where it helps coordinate assembly of the platform of the 30S subunit. This chain is Small ribosomal subunit protein uS8, found in Lactobacillus acidophilus (strain ATCC 700396 / NCK56 / N2 / NCFM).